Consider the following 513-residue polypeptide: Maturase K (513 aa).

Belongs to the intron maturase 2 family. MatK subfamily.

It localises to the plastid. Its subcellular location is the chloroplast. Its function is as follows. Usually encoded in the trnK tRNA gene intron. Probably assists in splicing its own and other chloroplast group II introns. The sequence is that of Maturase K from Typha latifolia (Bulrush).